Consider the following 130-residue polypeptide: Small ribosomal subunit protein uS9 (130 aa).

The protein belongs to the universal ribosomal protein uS9 family.

The sequence is that of Small ribosomal subunit protein uS9 from Bacillus licheniformis (strain ATCC 14580 / DSM 13 / JCM 2505 / CCUG 7422 / NBRC 12200 / NCIMB 9375 / NCTC 10341 / NRRL NRS-1264 / Gibson 46).